The chain runs to 205 residues: Protein PYRAB00100 (205 aa).

The region spanning 7-201 (EWGEFLVRLA…EEYPRGPVRR (195 aa)) is the AMMECR1 domain.

The chain is Protein PYRAB00100 from Pyrococcus abyssi (strain GE5 / Orsay).